The following is a 519-amino-acid chain: Glutamate--cysteine ligase (519 aa).

It belongs to the glutamate--cysteine ligase type 1 family. Type 1 subfamily.

The enzyme catalyses L-cysteine + L-glutamate + ATP = gamma-L-glutamyl-L-cysteine + ADP + phosphate + H(+). Its pathway is sulfur metabolism; glutathione biosynthesis; glutathione from L-cysteine and L-glutamate: step 1/2. This is Glutamate--cysteine ligase from Yersinia enterocolitica serotype O:8 / biotype 1B (strain NCTC 13174 / 8081).